A 344-amino-acid polypeptide reads, in one-letter code: MKMKLFQTICRQLRSSKFSVESAALVAFSTSSYSCGRKKKVNPYEEVDQEKYSNLVQSVLSSRGVAQTPGSVEEDALLCGPVSKHKLPNQGEDRRVPQNWFPIFNPERSDKPNASDPSVPLKIPLQRNVIPSVTRVLQQTMTKQQVFLLERWKQRMILELGEDGFKEYTSNVFLQGKRFHEALESILSPQETLKERDENLLKSGYIESVQHILKDVSGVRALESAVQHETLNYIGLLDCVAEYQGKLCVIDWKTSEKPKPFIQSTFDNPLQVVAYMGAMNHDTNYSFQVQCGLIVVAYKDGSPAHPHFMDAELCSQYWTKWLLRLEEYTEKKKNQNIQKPEYSE.

Catalysis depends on residues D238, D251, and K253. S343 bears the Phosphoserine mark.

Belongs to the MGME1 family.

Its subcellular location is the mitochondrion. Its function is as follows. Metal-dependent single-stranded DNA (ssDNA) exonuclease involved in mitochondrial genome maintenance. Has preference for 5'-3' exonuclease activity but is also capable of endonuclease activity on linear substrates. Necessary for maintenance of proper 7S DNA levels. Probably involved in mitochondrial DNA (mtDNA) repair, possibly via the processing of displaced DNA containing Okazaki fragments during RNA-primed DNA synthesis on the lagging strand or via processing of DNA flaps during long-patch base excision repair. Specifically binds 5-hydroxymethylcytosine (5hmC)-containing DNA in stem cells. The sequence is that of Mitochondrial genome maintenance exonuclease 1 from Homo sapiens (Human).